The following is a 1141-amino-acid chain: cGMP-inhibited 3',5'-cyclic phosphodiesterase 3A (1141 aa).

The segment at 1–41 is disordered; sequence MAVRGEAAQDWAKPGLRGPSPAPVARGDHRCRGGSPSSPRG. A helical membrane pass occupies residues 62 to 82; it reads SALCAGSLSVLLALLVRLVGG. The interval 89 to 111 is disordered; the sequence is ESSQEAAAEEEEEEGARGGVFPG. A run of 5 helical transmembrane segments spans residues 127–147, 157–177, 182–202, 207–227, and 229–249; these read LQPA…GLCL, AVAL…SLGV, LLSL…TWLV, LGVL…VSLE, and FKVA…LLLA. Residues 262-309 form a disordered region; the sequence is PAPPRERFGSQSSARTKEEIPGWKRRRRSSSVVAGEMSGCGGKSHRRT. Phosphoserine is present on serine 310. The span at 433 to 445 shows a compositional bias: low complexity; the sequence is RVSSTWTTTTSAT. The segment at 433–479 is disordered; it reads RVSSTWTTTTSATGLPTLEPAPVRRDRSASIKPHEAPSPSAVNPDSW. Basic and acidic residues predominate over residues 454 to 467; that stretch reads PVRRDRSASIKPHE. A phosphoserine mark is found at serine 492, serine 520, serine 524, and serine 533. The disordered stretch occupies residues 504–643; the sequence is HVKAKKQNRP…SDILQNDEEA (140 aa). The span at 522 to 532 shows a compositional bias: pro residues; that stretch reads VPSPSSSPPQG. The span at 618-637 shows a compositional bias: polar residues; sequence TSQVTSDYETNNNSDSSDIL. The tract at residues 669–1141 is interaction with SLFN12; it reads KPILAPEPLV…EETLAPQPDL (473 aa). Residues 674–1093 enclose the PDEase domain; that stretch reads PEPLVMDNLD…MMWKKVIEEE (420 aa). Residue histidine 752 is the Proton donor of the active site. AMP is bound at residue histidine 752. Positions 756, 836, 837, and 950 each coordinate Mn(2+). AMP contacts are provided by aspartate 837, aspartate 950, and glutamine 1001. A Mg(2+)-binding site is contributed by aspartate 837. 2 disordered regions span residues 1024–1062 and 1098–1141; these read GKWV…EAPR and GTEN…QPDL. A compositionally biased stretch (acidic residues) spans 1029–1046; that stretch reads DSDDSGDTDDPEEEEEEA. Serine 1033 bears the Phosphoserine mark. Phosphothreonine is present on threonine 1036. Over residues 1098–1113 the composition is skewed to polar residues; that stretch reads GTENQAPDQAPLQHSS. A Glycyl lysine isopeptide (Lys-Gly) (interchain with G-Cter in SUMO2) cross-link involves residue lysine 1120.

The protein belongs to the cyclic nucleotide phosphodiesterase family. PDE3 subfamily. In terms of assembly, homodimer. Interacts with PDE3A; direct low affinity interaction which is stimulated by binding of 17beta-estradiol/E2 to PDE3A and that positively regulates the ribonuclease activity of SLFN12. The cofactor is Mn(2+). Mg(2+) is required as a cofactor.

Its subcellular location is the membrane. The protein resides in the cytoplasm. It is found in the cytosol. The enzyme catalyses a nucleoside 3',5'-cyclic phosphate + H2O = a nucleoside 5'-phosphate + H(+). It carries out the reaction 3',5'-cyclic AMP + H2O = AMP + H(+). It catalyses the reaction 3',5'-cyclic GMP + H2O = GMP + H(+). The catalysed reaction is 3',5'-cyclic UMP + H2O = UMP + H(+). In terms of biological role, cyclic nucleotide phosphodiesterase with specificity for the second messengers cAMP and cGMP, which are key regulators of many important physiological processes. Also has activity toward cUMP. Independently of its catalytic activity it is part of an E2/17beta-estradiol-induced pro-apoptotic signaling pathway. E2 stabilizes the PDE3A/SLFN12 complex in the cytosol, promoting the dephosphorylation of SLFN12 and activating its pro-apoptotic ribosomal RNA/rRNA ribonuclease activity. This apoptotic pathway might be relevant in tissues with high concentration of E2 and be for instance involved in placenta remodeling. This Rattus norvegicus (Rat) protein is cGMP-inhibited 3',5'-cyclic phosphodiesterase 3A.